Consider the following 374-residue polypeptide: UDP-N-acetylglucosamine--N-acetylmuramyl-(pentapeptide) pyrophosphoryl-undecaprenol N-acetylglucosamine transferase (374 aa).

UDP-N-acetyl-alpha-D-glucosamine-binding positions include 10–12, Asn-124, Arg-166, Ser-196, and Gln-294; that span reads TGG.

This sequence belongs to the glycosyltransferase 28 family. MurG subfamily.

Its subcellular location is the cell membrane. It carries out the reaction di-trans,octa-cis-undecaprenyl diphospho-N-acetyl-alpha-D-muramoyl-L-alanyl-D-glutamyl-meso-2,6-diaminopimeloyl-D-alanyl-D-alanine + UDP-N-acetyl-alpha-D-glucosamine = di-trans,octa-cis-undecaprenyl diphospho-[N-acetyl-alpha-D-glucosaminyl-(1-&gt;4)]-N-acetyl-alpha-D-muramoyl-L-alanyl-D-glutamyl-meso-2,6-diaminopimeloyl-D-alanyl-D-alanine + UDP + H(+). The protein operates within cell wall biogenesis; peptidoglycan biosynthesis. Cell wall formation. Catalyzes the transfer of a GlcNAc subunit on undecaprenyl-pyrophosphoryl-MurNAc-pentapeptide (lipid intermediate I) to form undecaprenyl-pyrophosphoryl-MurNAc-(pentapeptide)GlcNAc (lipid intermediate II). The polypeptide is UDP-N-acetylglucosamine--N-acetylmuramyl-(pentapeptide) pyrophosphoryl-undecaprenol N-acetylglucosamine transferase (Symbiobacterium thermophilum (strain DSM 24528 / JCM 14929 / IAM 14863 / T)).